Here is a 473-residue protein sequence, read N- to C-terminus: Cytochrome P450 716A2 (473 aa).

A helical membrane pass occupies residues 1-21 (MYLTIIFLFISSIIFPLLFFL). A heme-binding site is contributed by cysteine 420.

Belongs to the cytochrome P450 family. Heme is required as a cofactor.

It is found in the membrane. Its function is as follows. Possesses triterpene oxidizing activity. Catalyzes the C28 hydroxylation of alpha-amyrin, beta-amyrin, and lupeol, producing uvaol, erythrodiol, and betulin, respectively. Catalyzes the C28 carboxylation of alpha- and beta-amyrin. Possesses 22alpha-hydroxylation activity against alpha- and beta-amaryn. The protein is Cytochrome P450 716A2 of Arabidopsis thaliana (Mouse-ear cress).